The following is a 144-amino-acid chain: Large ribosomal subunit protein uL16 (144 aa).

Over residues 1–19 (MLLPKRVKYRRQHRPKTTG) the composition is skewed to basic residues. Residues 1–23 (MLLPKRVKYRRQHRPKTTGRSKG) are disordered.

It belongs to the universal ribosomal protein uL16 family. Part of the 50S ribosomal subunit.

Functionally, binds 23S rRNA and is also seen to make contacts with the A and possibly P site tRNAs. The polypeptide is Large ribosomal subunit protein uL16 (Staphylococcus epidermidis (strain ATCC 35984 / DSM 28319 / BCRC 17069 / CCUG 31568 / BM 3577 / RP62A)).